A 40-amino-acid chain; its full sequence is Cytolysin SmT-1 (40 aa).

The plays an important role in the hemolytic activity stretch occupies residues A3–A12. The N-terminal region stretch occupies residues G11–S30.

Belongs to the actinoporin family. Sea anemone subfamily. In terms of assembly, octamer or nonamer in membranes. Monomer in the soluble state.

Its subcellular location is the secreted. It localises to the nematocyst. The protein resides in the target cell membrane. Pore-forming protein that forms cations-selective hydrophilic pores of around 1 nm and causes cardiac stimulation and cytolysis. Pore formation is a multi-step process that involves specific recognition of membrane sphingomyelin (but neither cholesterol nor phosphatidylcholine) using aromatic rich region and adjacent phosphocholine (POC) binding site, firm binding to the membrane (mainly driven by hydrophobic interactions) accompanied by the transfer of the N-terminal region to the lipid-water interface and finally pore formation after oligomerization of monomers. This toxin shows hemolytic activities. In Stichodactyla mertensii (Merten's carpet sea anemone), this protein is Cytolysin SmT-1.